Reading from the N-terminus, the 1273-residue chain is MFNRKTLLCTILLVLQAVIRSFCEDASNLAPVIIEHPIDVVVSRGSPATLNCGAKPSTAKITWYKDGQPVITNKEQVNSHRIVLDTGSLFLLKVNSGKNGKDSDAGAYYCVASNEHGEVKSNEGSLKLAMLREDFRVRPRTVQALGGEMAVLECSPPRGFPEPVVSWRKDDKELRIQDMPRYTLHSDGNLIIDPVDRSDSGTYQCVANNMVGERVSNPARLSVFEKPKFEQEPKDMTVDVGAAVLFDCRVTGDPQPQITWKRKNEPMPVTRAYIAKDNRGLRIERVQPSDEGEYVCYARNPAGTLEASAHLRVQAPPSFQTKPADQSVPAGGTATFECTLVGQPSPAYFWSKEGQQDLLFPSYVSADGRTKVSPTGTLTIEEVRQVDEGAYVCAGMNSAGSSLSKAALKVTTKAVTGNTPAKPPPTIEHGHQNQTLMVGSSAILPCQASGKPTPGISWLRDGLPIDITDSRISQHSTGSLHIADLKKPDTGVYTCIAKNEDGESTWSASLTVEDHTSNAQFVRMPDPSNFPSSPTQPIIVNVTDTEVELHWNAPSTSGAGPITGYIIQYYSPDLGQTWFNIPDYVASTEYRIKGLKPSHSYMFVIRAENEKGIGTPSVSSALVTTSKPAAQVALSDKNKMDMAIAEKRLTSEQLIKLEEVKTINSTAVRLFWKKRKLEELIDGYYIKWRGPPRTNDNQYVNVTSPSTENYVVSNLMPFTNYEFFVIPYHSGVHSIHGAPSNSMDVLTAEAPPSLPPEDVRIRMLNLTTLRISWKAPKADGINGILKGFQIVIVGQAPNNNRNITTNERAASVTLFHLVTGMTYKIRVAARSNGGVGVSHGTSEVIMNQDTLEKHLAAQQENESFLYGLINKSHVPVIVIVAILIIFVVIIIAYCYWRNSRNSDGKDRSFIKINDGSVHMASNNLWDVAQNPNQNPMYNTAGRMTMNNRNGQALYSLTPNAQDFFNNCDDYSGTMHRPGSEHHYHYAQLTGGPGNAMSTFYGNQYHDDPSPYATTTLVLSNQQPAWLNDKMLRAPAMPTNPVPPEPPARYADHTAGRRSRSSRASDGRGTLNGGLHHRTSGSQRSDSPPHTDVSYVQLHSSDGTGSSKERTGERRTPPNKTLMDFIPPPPSNPPPPGGHVYDDIFQTATRRQLNRGSTPREDTYDSVSDGAFARVDVNARPTSRNRNLGGRPLKGKRDDDSQRSSLMMDDDGGSSEADGENSEGDVPRGGVRKAVPRMGISASTLAHSCYGTNGTAQRFRSIPRNNGIVTQEQT.

Positions 1 to 23 (MFNRKTLLCTILLVLQAVIRSFC) are cleaved as a signal peptide. Ig-like C2-type domains lie at 31 to 127 (PVII…GSLK), 133 to 222 (EDFR…ARLS), 227 to 312 (PKFE…AHLR), 317 to 411 (PSFQ…LKVT), and 425 to 511 (PTIE…ASLT). 5 disulfide bridges follow: cysteine 52-cysteine 110, cysteine 154-cysteine 205, cysteine 248-cysteine 296, cysteine 338-cysteine 393, and cysteine 446-cysteine 495. 3 consecutive Fibronectin type-III domains span residues 533 to 628 (SPTQ…TSKP), 653 to 750 (QLIK…TAEA), and 755 to 849 (PPED…MNQD). Residues 874–894 (VPVIVIVAILIIFVVIIIAYC) form a helical membrane-spanning segment. The disordered stretch occupies residues 1033–1273 (APAMPTNPVP…NNGIVTQEQT (241 aa)). Residues 1037–1046 (PTNPVPPEPP) are compositionally biased toward pro residues. Residues 1096 to 1105 (QLHSSDGTGS) show a composition bias toward polar residues. Over residues 1106–1115 (SKERTGERRT) the composition is skewed to basic and acidic residues. The segment covering 1125 to 1136 (IPPPPSNPPPPG) has biased composition (pro residues). The segment covering 1145–1156 (QTATRRQLNRGS) has biased composition (polar residues). A compositionally biased stretch (acidic residues) spans 1207–1222 (MDDDGGSSEADGENSE). Residues 1240-1273 (SASTLAHSCYGTNGTAQRFRSIPRNNGIVTQEQT) are compositionally biased toward polar residues.

It belongs to the immunoglobulin superfamily. ROBO/SAX3 family. As to expression, expressed in the AVG interneuron and the male-specific sensory neuron HOA.

The protein localises to the membrane. Its function is as follows. Required to confine migrating sex myoblasts to the ventral muscle quadrants during their migration through the body and for multiple aspects of sensory, motor, and interneuron axon guidance. This is Protein sax-3 from Caenorhabditis elegans.